The sequence spans 314 residues: Glycerol-3-phosphate dehydrogenase [NAD(P)+] (314 aa).

Positions 14, 15, 35, and 108 each coordinate NADPH. Residues lysine 108 and glycine 136 each contribute to the sn-glycerol 3-phosphate site. Alanine 140 serves as a coordination point for NADPH. Residues lysine 191, aspartate 247, serine 257, arginine 258, and asparagine 259 each contribute to the sn-glycerol 3-phosphate site. The Proton acceptor role is filled by lysine 191. NADPH is bound at residue arginine 258. NADPH-binding residues include leucine 282 and glutamate 284.

The protein belongs to the NAD-dependent glycerol-3-phosphate dehydrogenase family.

The protein resides in the cytoplasm. It catalyses the reaction sn-glycerol 3-phosphate + NAD(+) = dihydroxyacetone phosphate + NADH + H(+). The catalysed reaction is sn-glycerol 3-phosphate + NADP(+) = dihydroxyacetone phosphate + NADPH + H(+). The protein operates within membrane lipid metabolism; glycerophospholipid metabolism. Functionally, catalyzes the reduction of the glycolytic intermediate dihydroxyacetone phosphate (DHAP) to sn-glycerol 3-phosphate (G3P), the key precursor for phospholipid synthesis. This chain is Glycerol-3-phosphate dehydrogenase [NAD(P)+], found in Rickettsia bellii (strain OSU 85-389).